The chain runs to 217 residues: Adenylate kinase (217 aa).

10 to 15 (GAGKGT) is a binding site for ATP. Residues 30-59 (STGDMLRAAVKAGTPLGIEAKKVMDAGGLV) are NMP. AMP is bound by residues Thr-31, Arg-36, 57-59 (GLV), 85-88 (GFPR), and Gln-92. The segment at 122–159 (GRRAHLASGRTYHVKYNPPKVEGKDDVTGEDLVQRDDD) is LID. Residues Arg-123 and 132–133 (TY) each bind ATP. 2 residues coordinate AMP: Arg-156 and Arg-167. Gly-203 provides a ligand contact to ATP.

It belongs to the adenylate kinase family. As to quaternary structure, monomer.

The protein resides in the cytoplasm. The catalysed reaction is AMP + ATP = 2 ADP. Its pathway is purine metabolism; AMP biosynthesis via salvage pathway; AMP from ADP: step 1/1. Its function is as follows. Catalyzes the reversible transfer of the terminal phosphate group between ATP and AMP. Plays an important role in cellular energy homeostasis and in adenine nucleotide metabolism. The chain is Adenylate kinase from Azoarcus sp. (strain BH72).